The sequence spans 607 residues: Thymidine kinase (607 aa).

2 disordered regions span residues Met-1–Thr-160 and Asp-180–Leu-215. Positions Lys-17 to Phe-32 are enriched in basic and acidic residues. Polar residues-rich tracts occupy residues Ala-88–Pro-106, Arg-148–Thr-160, and Arg-194–Lys-203. Gly-291–Thr-298 serves as a coordination point for ATP. Glu-317 (proton acceptor) is an active-site residue. Residue Gln-355 participates in substrate binding. Residue Arg-445 participates in ATP binding. A substrate-binding site is contributed by Arg-451.

The protein belongs to the herpesviridae thymidine kinase family. As to quaternary structure, homodimer.

The protein localises to the virion tegument. The protein resides in the host nucleus. The catalysed reaction is thymidine + ATP = dTMP + ADP + H(+). In terms of biological role, catalyzes the transfer of the gamma-phospho group of ATP to thymidine to generate dTMP in the salvage pathway of pyrimidine synthesis. The dTMP serves as a substrate for DNA polymerase during viral DNA replication. Allows the virus to be reactivated and to grow in non-proliferative cells lacking a high concentration of phosphorylated nucleic acid precursors. The polypeptide is Thymidine kinase (Epstein-Barr virus (strain GD1) (HHV-4)).